Consider the following 341-residue polypeptide: Glycerol-3-phosphate dehydrogenase [NAD(P)+] (341 aa).

NADPH contacts are provided by serine 12, tryptophan 13, arginine 33, and lysine 107. Lysine 107, glycine 134, and threonine 136 together coordinate sn-glycerol 3-phosphate. Residue alanine 138 participates in NADPH binding. Residues lysine 189, aspartate 242, serine 252, arginine 253, and asparagine 254 each coordinate sn-glycerol 3-phosphate. Lysine 189 functions as the Proton acceptor in the catalytic mechanism. Residue arginine 253 coordinates NADPH. The NADPH site is built by valine 277 and glutamate 279.

Belongs to the NAD-dependent glycerol-3-phosphate dehydrogenase family.

Its subcellular location is the cytoplasm. The enzyme catalyses sn-glycerol 3-phosphate + NAD(+) = dihydroxyacetone phosphate + NADH + H(+). It carries out the reaction sn-glycerol 3-phosphate + NADP(+) = dihydroxyacetone phosphate + NADPH + H(+). It participates in membrane lipid metabolism; glycerophospholipid metabolism. Functionally, catalyzes the reduction of the glycolytic intermediate dihydroxyacetone phosphate (DHAP) to sn-glycerol 3-phosphate (G3P), the key precursor for phospholipid synthesis. This Halothermothrix orenii (strain H 168 / OCM 544 / DSM 9562) protein is Glycerol-3-phosphate dehydrogenase [NAD(P)+].